The following is a 305-amino-acid chain: uncharacterized protein (305 aa).

The disordered stretch occupies residues 208-236 (SYAQSPAVKKKKWRHSGGKKNNPRENHID). The span at 215–225 (VKKKKWRHSGG) shows a compositional bias: basic residues.

This is an uncharacterized protein from Bacillus subtilis (strain 168).